A 40-amino-acid polypeptide reads, in one-letter code: Dolichyl-diphosphooligosaccharide--protein glycosyltransferase subunit 4 (40 aa).

Topologically, residues 1–7 (MITDMQL) are lumenal. A helical membrane pass occupies residues 8-28 (AIFSNVLGVFLFLLVVAYHYI). The Cytoplasmic segment spans residues 29–40 (NANTGKPSAKAK).

It belongs to the OST4 family. As to quaternary structure, component of the oligosaccharyltransferase (OST) complex.

It localises to the endoplasmic reticulum membrane. Subunit of the oligosaccharyl transferase (OST) complex that catalyzes the initial transfer of a defined glycan (Glc(3)Man(9)GlcNAc(2) in eukaryotes) from the lipid carrier dolichol-pyrophosphate to an asparagine residue within an Asn-X-Ser/Thr consensus motif in nascent polypeptide chains, the first step in protein N-glycosylation. N-glycosylation occurs cotranslationally and the complex associates with the Sec61 complex at the channel-forming translocon complex that mediates protein translocation across the endoplasmic reticulum (ER). All subunits are required for a maximal enzyme activity. This chain is Dolichyl-diphosphooligosaccharide--protein glycosyltransferase subunit 4, found in Drosophila sechellia (Fruit fly).